The following is a 191-amino-acid chain: Putative manganese efflux pump MntP (191 aa).

The next 6 helical transmembrane spans lie at 3 to 23, 37 to 57, 65 to 85, 107 to 129, 144 to 164, and 169 to 189; these read PISI…AAIG, LRAG…GWLL, VEAF…IHMI, WKLA…GLAF, CTLT…SMVG, and IIGG…HLHG.

This sequence belongs to the MntP (TC 9.B.29) family.

The protein resides in the cell inner membrane. Its function is as follows. Probably functions as a manganese efflux pump. The protein is Putative manganese efflux pump MntP of Stenotrophomonas maltophilia (strain R551-3).